Here is a 307-residue protein sequence, read N- to C-terminus: Small ribosomal subunit biogenesis GTPase RsgA (307 aa).

Residues 1–21 (MPSEHPFSDGISTPNPKETMN) are disordered. The span at 10–21 (GISTPNPKETMN) shows a compositional bias: polar residues. The 158-residue stretch at 85–242 (RQDAWKTKLI…LIDSPGLQEF (158 aa)) folds into the CP-type G domain. GTP contacts are provided by residues 135 to 138 (NKAD) and 184 to 192 (GQSGMGKST). Zn(2+) is bound by residues Cys-266, Cys-271, His-273, and Cys-279.

This sequence belongs to the TRAFAC class YlqF/YawG GTPase family. RsgA subfamily. Monomer. Associates with 30S ribosomal subunit, binds 16S rRNA. The cofactor is Zn(2+).

It is found in the cytoplasm. One of several proteins that assist in the late maturation steps of the functional core of the 30S ribosomal subunit. Helps release RbfA from mature subunits. May play a role in the assembly of ribosomal proteins into the subunit. Circularly permuted GTPase that catalyzes slow GTP hydrolysis, GTPase activity is stimulated by the 30S ribosomal subunit. This Neisseria gonorrhoeae (strain ATCC 700825 / FA 1090) protein is Small ribosomal subunit biogenesis GTPase RsgA.